Consider the following 91-residue polypeptide: DNA-directed RNA polymerase subunit omega (91 aa).

The protein belongs to the RNA polymerase subunit omega family. As to quaternary structure, the RNAP catalytic core consists of 2 alpha, 1 beta, 1 beta' and 1 omega subunit. When a sigma factor is associated with the core the holoenzyme is formed, which can initiate transcription.

The catalysed reaction is RNA(n) + a ribonucleoside 5'-triphosphate = RNA(n+1) + diphosphate. Promotes RNA polymerase assembly. Latches the N- and C-terminal regions of the beta' subunit thereby facilitating its interaction with the beta and alpha subunits. This Erwinia tasmaniensis (strain DSM 17950 / CFBP 7177 / CIP 109463 / NCPPB 4357 / Et1/99) protein is DNA-directed RNA polymerase subunit omega.